We begin with the raw amino-acid sequence, 100 residues long: Large ribosomal subunit protein bL27 (100 aa).

Residues 1–9 constitute a propeptide that is removed on maturation; it reads MLVMNLQLF.

This sequence belongs to the bacterial ribosomal protein bL27 family. Post-translationally, the N-terminus is cleaved by ribosomal processing cysteine protease Prp.

This is Large ribosomal subunit protein bL27 from Clostridium botulinum (strain 657 / Type Ba4).